We begin with the raw amino-acid sequence, 236 residues long: Penton protein H240R (236 aa).

It belongs to the asfivirus H240R family.

It localises to the virion. In terms of biological role, forms the penton at the fivefold vertices of the icosahedral capsid. Together with the minor capsid proteins (p17, p49, and M1249L), forms a complicated network immediately below the outer capsid shell, stabilizing the whole capsid. The chain is Penton protein H240R from African swine fever virus (isolate Warthog/Namibia/Wart80/1980) (ASFV).